We begin with the raw amino-acid sequence, 608 residues long: Elongation factor 4 (608 aa).

In terms of domain architecture, tr-type G spans 11-193 (KKIRNFSIIA…QIVEKVPEPS (183 aa)). GTP is bound by residues 23–28 (DHGKST) and 140–143 (NKID).

This sequence belongs to the TRAFAC class translation factor GTPase superfamily. Classic translation factor GTPase family. LepA subfamily.

It is found in the cell membrane. It carries out the reaction GTP + H2O = GDP + phosphate + H(+). In terms of biological role, required for accurate and efficient protein synthesis under certain stress conditions. May act as a fidelity factor of the translation reaction, by catalyzing a one-codon backward translocation of tRNAs on improperly translocated ribosomes. Back-translocation proceeds from a post-translocation (POST) complex to a pre-translocation (PRE) complex, thus giving elongation factor G a second chance to translocate the tRNAs correctly. Binds to ribosomes in a GTP-dependent manner. This Listeria welshimeri serovar 6b (strain ATCC 35897 / DSM 20650 / CCUG 15529 / CIP 8149 / NCTC 11857 / SLCC 5334 / V8) protein is Elongation factor 4.